The following is a 354-amino-acid chain: Putative Xaa-Pro aminopeptidase (354 aa).

Positions 213, 224, 290, 319, and 333 each coordinate Mn(2+).

This sequence belongs to the peptidase M24B family. The cofactor is Mn(2+).

The enzyme catalyses Release of any N-terminal amino acid, including proline, that is linked to proline, even from a dipeptide or tripeptide.. This Mycoplasma genitalium (strain ATCC 33530 / DSM 19775 / NCTC 10195 / G37) (Mycoplasmoides genitalium) protein is Putative Xaa-Pro aminopeptidase (pepP).